Consider the following 457-residue polypeptide: Ribulose bisphosphate carboxylase-like protein (457 aa).

3 residues coordinate Mg(2+): lysine 199, aspartate 201, and glutamate 202. Lysine 199 carries the N6-carboxylysine modification. The segment at 426 to 457 is disordered; sequence AIAAFGKPAHGQAASPQPSEQASEPDAAGGDS.

It belongs to the RuBisCO large chain family. Type IV subfamily. The cofactor is Mg(2+).

Its function is as follows. May be involved in sulfur metabolism and oxidative stress response. Does not show RuBisCO activity. The chain is Ribulose bisphosphate carboxylase-like protein from Allochromatium vinosum (strain ATCC 17899 / DSM 180 / NBRC 103801 / NCIMB 10441 / D) (Chromatium vinosum).